A 371-amino-acid chain; its full sequence is Chaperone protein DnaJ (371 aa).

The J domain occupies Asp5–Gly69. Residues Gly133 to Arg215 form a CR-type zinc finger. Cys146, Cys149, Cys163, Cys166, Cys189, Cys192, Cys203, and Cys206 together coordinate Zn(2+). 4 CXXCXGXG motif repeats span residues Cys146–Gly153, Cys163–Gly170, Cys189–Gly196, and Cys203–Gly210.

It belongs to the DnaJ family. Homodimer. Zn(2+) is required as a cofactor.

The protein resides in the cytoplasm. Its function is as follows. Participates actively in the response to hyperosmotic and heat shock by preventing the aggregation of stress-denatured proteins and by disaggregating proteins, also in an autonomous, DnaK-independent fashion. Unfolded proteins bind initially to DnaJ; upon interaction with the DnaJ-bound protein, DnaK hydrolyzes its bound ATP, resulting in the formation of a stable complex. GrpE releases ADP from DnaK; ATP binding to DnaK triggers the release of the substrate protein, thus completing the reaction cycle. Several rounds of ATP-dependent interactions between DnaJ, DnaK and GrpE are required for fully efficient folding. Also involved, together with DnaK and GrpE, in the DNA replication of plasmids through activation of initiation proteins. The polypeptide is Chaperone protein DnaJ (Bacillus cereus (strain AH820)).